The chain runs to 1117 residues: MKKASRSVGSVPKVSAISKTQTAEKIKPENSSSASTGGKLVKPGTAASLSKTKSSDDLLAGMAGGVTVTNGVKGKKSTCPSAAPSASAPAMTTVENKSKISTGTASSTKRNTSTGNKESSSTRERLRERTRLNQSKKLPSAGQGANDMALAKRSRSRTATECDVRMSKSKSDNQISDRAALEAKVKDLLTLAKTKDVEILHLRNELRDMRAQLGINEDHSEGDEKSEKETIMAHQPTDVESTLLQLQEQNTAIREELNQLKNENRMLKDRLNALGFSLEQRLDNSEKLFGYQSLSPEITPGNQSDGGGTLTSSVEGSAPGSVEDLLSQDENTLMDHQHSNSMDNLDSECSEVYQPLTSSDDALDAPSSSESEGIPSIERSRKGSSGNASEVSVACLTERIHQMEENQHSTSEELQATLQELADLQQITQELNSENERLGEEKVILMESLCQQSDKLEHFSRQIEYFRSLLDEHHISYVIDEDVKSGRYMELEQRYMDLAENARFEREQLLGVQQHLSNTLKMAEQDNKEAQEMIGALKERSHHMERIIESEQKGKAALAATLEEYKATVASDQIEMNRLKAQLENEKQKVAELYSIHNSGDKSDIQDLLESVRLDKEKAETLASSLQEDLAHTRNDANRLQDAIAKVEDEYRAFQEEAKKQIEDLNMTLEKLRSDLDEKETERSDMKETIFELEDEVEQHRAVKLHDNLIISDLENTVKKLQDQKHDMEREIKTLHRRLREESAEWRQFQADLQTAVVIANDIKSEAQEEIGDLKRRLHEAQEKNEKLTKELEEIKSRKQEEERGRVYNYMNAVERDLAALRQGMGLSRRSSTSSEPTPTVKTLIKSFDSASQVPNPAAAAIPRTPLSPSPMKTPPAAAVSPMQRHSISGPISTSKPLTALSDKRPNYGEIPVQEHLLRTSSASRPASLPRGPAMESAKTLSVSRRSSEEMKRDISAQEGASPASLMAMGTTSPQLSLSSSPTASVTPTTRSRIREERKDPLSALAREYGGSKRNALLKWCQKKTEGYQNIDITNFSSSWNDGLAFCALLHTYLPAHIPYQELNSQDKRRNFMLAFQAAESVGIKSTLDINEMVRTERPDWQNVMLYVTAIYKYFET.

Disordered regions lie at residues 1 to 176 (MKKA…NQIS), 293 to 323 (SLSP…GSVE), and 358 to 390 (SSDD…NASE). The segment covering 45–90 (TAASLSKTKSSDDLLAGMAGGVTVTNGVKGKKSTCPSAAPSASAPA) has biased composition (low complexity). A compositionally biased stretch (polar residues) spans 93 to 117 (TVENKSKISTGTASSTKRNTSTGNK). 2 stretches are compositionally biased toward basic and acidic residues: residues 120-131 (SSTRERLRERTR) and 158-171 (TATE…KSKS). Positions 168–280 (KSKSDNQISD…LNALGFSLEQ (113 aa)) form a coiled coil. Over residues 293–303 (SLSPEITPGNQ) the composition is skewed to polar residues. Low complexity predominate over residues 358–377 (SSDDALDAPSSSESEGIPSI). A phosphoserine mark is found at Ser384, Ser385, and Ser389. 2 coiled-coil regions span residues 394–449 (ACLT…MESL) and 487–807 (RYME…RGRV). Residues Ser868, Ser881, and Ser887 each carry the phosphoserine modification. The segment at 919–1001 (RTSSASRPAS…SRIREERKDP (83 aa)) is disordered. A compositionally biased stretch (basic and acidic residues) spans 946 to 956 (RSSEEMKRDIS). The span at 971–990 (TTSPQLSLSSSPTASVTPTT) shows a compositional bias: low complexity. The Calponin-homology (CH) domain occupies 1011-1116 (GSKRNALLKW…YVTAIYKYFE (106 aa)).

It belongs to the cytospin-A family. As to quaternary structure, may interact with both microtubules and actin cytoskeleton.

It localises to the cytoplasm. The protein resides in the cytoskeleton. Its subcellular location is the spindle. It is found in the cell junction. The protein localises to the gap junction. Functionally, involved in cytokinesis and spindle organization. May play a role in actin cytoskeleton organization and microtubule stabilization and hence required for proper cell adhesion and migration. The sequence is that of Cytospin-A (SPECC1L) from Pan troglodytes (Chimpanzee).